We begin with the raw amino-acid sequence, 298 residues long: Probable endonuclease 4 (298 aa).

Residues His69, His111, Glu146, Asp180, His183, His215, Asp228, His230, and Glu260 each coordinate Zn(2+).

It belongs to the AP endonuclease 2 family. Zn(2+) is required as a cofactor.

The catalysed reaction is Endonucleolytic cleavage to 5'-phosphooligonucleotide end-products.. Functionally, endonuclease IV plays a role in DNA repair. It cleaves phosphodiester bonds at apurinic or apyrimidinic (AP) sites, generating a 3'-hydroxyl group and a 5'-terminal sugar phosphate. The chain is Probable endonuclease 4 from Bacillus cereus (strain 03BB102).